The chain runs to 1381 residues: Regulator of G-protein signaling 12 (1381 aa).

The PDZ domain occupies Ser-21–Thr-98. 2 positions are modified to phosphoserine: Ser-171 and Ser-194. Residue Lys-195 forms a Glycyl lysine isopeptide (Lys-Gly) (interchain with G-Cter in SUMO2) linkage. Residues Ser-223 to Arg-390 enclose the PID domain. 3 disordered regions span residues Ala-409 to Phe-428, Leu-442 to Gly-528, and Arg-620 to Thr-644. Residues His-412 to Phe-428 are compositionally biased toward polar residues. 2 positions are modified to omega-N-methylarginine: Arg-524 and Arg-633. Residues Ser-661 and Ser-671 each carry the phosphoserine modification. The 118-residue stretch at Ser-715–Val-832 folds into the RGS domain. A disordered region spans residues Pro-842–Gly-942. Low complexity predominate over residues Ser-849–Lys-869. Phosphoserine is present on residues Ser-850 and Ser-879. The span at Asp-914 to Pro-923 shows a compositional bias: basic and acidic residues. The residue at position 943 (Ser-943) is a Phosphoserine. RBD domains follow at residues Lys-962–Arg-1032 and Leu-1034–Arg-1104. Residues Glu-1102–Lys-1117 are compositionally biased toward basic and acidic residues. The segment at Glu-1102–Glu-1169 is disordered. The span at Lys-1122 to Arg-1132 shows a compositional bias: polar residues. The span at Ile-1151–Glu-1169 shows a compositional bias: basic and acidic residues. A GoLoco domain is found at Ala-1187–Leu-1209. 2 disordered regions span residues Ser-1227–Thr-1318 and Leu-1347–Phe-1381. Residues Ser-1261–Pro-1280 are compositionally biased toward low complexity. Over residues Leu-1361–Phe-1381 the composition is skewed to pro residues.

Interacts with GNAI1, GNAI2 and GNAI3; the interactions are GDP-dependent. In terms of tissue distribution, expressed in brain.

It localises to the nucleus. It is found in the cytoplasm. The protein localises to the cell projection. Its subcellular location is the dendrite. The protein resides in the synapse. In terms of biological role, regulates G protein-coupled receptor signaling cascades. Inhibits signal transduction by increasing the GTPase activity of G protein alpha subunits, thereby driving them into their inactive GDP-bound form. In Mus musculus (Mouse), this protein is Regulator of G-protein signaling 12 (Rgs12).